A 111-amino-acid polypeptide reads, in one-letter code: Large ribosomal subunit protein uL22 (111 aa).

This sequence belongs to the universal ribosomal protein uL22 family. In terms of assembly, part of the 50S ribosomal subunit.

This protein binds specifically to 23S rRNA; its binding is stimulated by other ribosomal proteins, e.g. L4, L17, and L20. It is important during the early stages of 50S assembly. It makes multiple contacts with different domains of the 23S rRNA in the assembled 50S subunit and ribosome. Functionally, the globular domain of the protein is located near the polypeptide exit tunnel on the outside of the subunit, while an extended beta-hairpin is found that lines the wall of the exit tunnel in the center of the 70S ribosome. The polypeptide is Large ribosomal subunit protein uL22 (Mycoplasma mycoides subsp. mycoides SC (strain CCUG 32753 / NCTC 10114 / PG1)).